The sequence spans 478 residues: Early growth response protein 4 (478 aa).

The segment at 275-302 (TEGLPALLTPPGGEGGSGGEGGEFLAAP) is disordered. Over residues 286-296 (GGEGGSGGEGG) the composition is skewed to gly residues. 3 C2H2-type zinc fingers span residues 372–396 (FACP…LRIH), 402–424 (FQCR…VRTH), and 430–452 (FACD…SKVH).

The protein belongs to the EGR C2H2-type zinc-finger protein family.

The protein resides in the nucleus. In terms of biological role, transcriptional regulator. Recognizes and binds to the DNA sequence 5'-GCGGGGGCG-3' (GSG). Activates the transcription of target genes whose products are required for mitogenesis and differentiation. The polypeptide is Early growth response protein 4 (Egr4) (Mus musculus (Mouse)).